Reading from the N-terminus, the 314-residue chain is Splicing factor YJU2 (314 aa).

Zn(2+) is bound by residues Cys-43, Cys-46, Cys-80, and Cys-83. Disordered stretches follow at residues Met-178–Pro-238 and Leu-253–Ser-314. Over residues Glu-200–Glu-209 the composition is skewed to basic and acidic residues. 3 positions are modified to phosphoserine: Ser-211, Ser-213, and Ser-220. A compositionally biased stretch (low complexity) spans Pro-222–Ala-232. Residues Pro-290–Gln-302 show a composition bias toward polar residues. 3 positions are modified to phosphoserine: Ser-309, Ser-312, and Ser-314.

Belongs to the CWC16 family. YJU2 subfamily. Component of the spliceosome. Present in the activated B complex, the catalytically activated B* complex which catalyzes the branching, the catalytic step 1 C complex catalyzing the exon ligation, and the postcatalytic P complex containing the ligated exons (mRNA) and the excised lariat intron.

It localises to the nucleus. Part of the spliceosome which catalyzes two sequential transesterification reactions, first the excision of the non-coding intron from pre-mRNA and then the ligation of the coding exons to form the mature mRNA. Plays a role in stabilizing the structure of the spliceosome catalytic core and docking of the branch helix into the active site, producing 5'-exon and lariat intron-3'-intermediates. May protect cells from TP53-dependent apoptosis upon dsDNA break damage through association with PRP19-CD5L complex. The chain is Splicing factor YJU2 from Mus musculus (Mouse).